The following is a 103-amino-acid chain: uncharacterized protein (103 aa).

The next 2 helical transmembrane spans lie at 13–33 (LLPF…YCIL) and 77–97 (FSIY…PYLF).

It is found in the endoplasmic reticulum membrane. This is an uncharacterized protein from Schizosaccharomyces pombe (strain 972 / ATCC 24843) (Fission yeast).